Consider the following 433-residue polypeptide: F-box only protein 15 (433 aa).

An F-box domain is found at 1-41; the sequence is MPSEILVKILSYLDAVTLVCIGCVSRRFYHLADDNLIWVRK.

In terms of assembly, directly interacts with SKP1 and CUL1. As to expression, expressed in testis.

Substrate-recognition component of the SCF (SKP1-CUL1-F-box protein)-type E3 ubiquitin ligase complex. In Mus musculus (Mouse), this protein is F-box only protein 15 (Fbxo15).